The chain runs to 2249 residues: Outer membrane protein A (2249 aa).

An N-terminal signal peptide occupies residues Met1–Ala28. The Type I 1 repeat unit spans residues Ile212–Asp286. The 14 X approximate tandem repeats stretch occupies residues Ile212–Gly1180. Type II repeat units follow at residues Ile287–Asn358 and Val359–Asp430. A Type I 2 repeat occupies Ile431–Asn505. Residues Ile506–Asp577 form a Type II 3 repeat. A Type I 3 repeat occupies Ile578–Asp652. The Type II 4 repeat unit spans residues Ile653–Asp724. Type I repeat units lie at residues Ile725 to Asp799, Ile800 to Asp874, and Ile875 to Asp949. Type II repeat units follow at residues Ile950–Asn1021, Val1022–Asn1093, and Val1094–Asp1165. One copy of the Type I 7; truncated repeat lies at Ile1166–Gly1180. The Autotransporter domain maps to Asp1962 to Phe2249.

This sequence belongs to the rickettsiae OmpA/OmpB family. Glycosylated.

It is found in the periplasm. The protein resides in the secreted. The protein localises to the cell surface. It localises to the cell outer membrane. Functionally, elicits protective immunity. The sequence is that of Outer membrane protein A (ompA) from Rickettsia rickettsii.